The sequence spans 441 residues: Ribulose bisphosphate carboxylase large chain (441 aa).

K4 carries the N6,N6,N6-trimethyllysine modification. Residues N113 and T163 each contribute to the substrate site. Residue K165 is the Proton acceptor of the active site. K167 lines the substrate pocket. Positions 191, 193, and 194 each coordinate Mg(2+). K191 carries the post-translational modification N6-carboxylysine. Catalysis depends on H284, which acts as the Proton acceptor. Positions 285, 317, and 369 each coordinate substrate.

The protein belongs to the RuBisCO large chain family. Type I subfamily. Heterohexadecamer of 8 large chains and 8 small chains; disulfide-linked. The disulfide link is formed within the large subunit homodimers. It depends on Mg(2+) as a cofactor. The disulfide bond which can form in the large chain dimeric partners within the hexadecamer appears to be associated with oxidative stress and protein turnover.

The protein localises to the plastid. Its subcellular location is the chloroplast. It catalyses the reaction 2 (2R)-3-phosphoglycerate + 2 H(+) = D-ribulose 1,5-bisphosphate + CO2 + H2O. The enzyme catalyses D-ribulose 1,5-bisphosphate + O2 = 2-phosphoglycolate + (2R)-3-phosphoglycerate + 2 H(+). In terms of biological role, ruBisCO catalyzes two reactions: the carboxylation of D-ribulose 1,5-bisphosphate, the primary event in carbon dioxide fixation, as well as the oxidative fragmentation of the pentose substrate in the photorespiration process. Both reactions occur simultaneously and in competition at the same active site. This Heliamphora nutans (Venezuelan marsh pitcher plant) protein is Ribulose bisphosphate carboxylase large chain.